Reading from the N-terminus, the 570-residue chain is Proline--tRNA ligase (570 aa).

The protein belongs to the class-II aminoacyl-tRNA synthetase family. ProS type 1 subfamily. Homodimer.

Its subcellular location is the cytoplasm. The enzyme catalyses tRNA(Pro) + L-proline + ATP = L-prolyl-tRNA(Pro) + AMP + diphosphate. Catalyzes the attachment of proline to tRNA(Pro) in a two-step reaction: proline is first activated by ATP to form Pro-AMP and then transferred to the acceptor end of tRNA(Pro). As ProRS can inadvertently accommodate and process non-cognate amino acids such as alanine and cysteine, to avoid such errors it has two additional distinct editing activities against alanine. One activity is designated as 'pretransfer' editing and involves the tRNA(Pro)-independent hydrolysis of activated Ala-AMP. The other activity is designated 'posttransfer' editing and involves deacylation of mischarged Ala-tRNA(Pro). The misacylated Cys-tRNA(Pro) is not edited by ProRS. The sequence is that of Proline--tRNA ligase from Shewanella sp. (strain ANA-3).